Consider the following 347-residue polypeptide: Ribosomal RNA small subunit methyltransferase H (347 aa).

Residues 50–52 (GGH), D69, F96, D125, and Q132 each bind S-adenosyl-L-methionine.

Belongs to the methyltransferase superfamily. RsmH family.

It localises to the cytoplasm. The enzyme catalyses cytidine(1402) in 16S rRNA + S-adenosyl-L-methionine = N(4)-methylcytidine(1402) in 16S rRNA + S-adenosyl-L-homocysteine + H(+). Functionally, specifically methylates the N4 position of cytidine in position 1402 (C1402) of 16S rRNA. This chain is Ribosomal RNA small subunit methyltransferase H, found in Corynebacterium aurimucosum (strain ATCC 700975 / DSM 44827 / CIP 107346 / CN-1) (Corynebacterium nigricans).